Reading from the N-terminus, the 479-residue chain is Sulfate adenylyltransferase subunit 1 (479 aa).

Residues 25–239 (KSLLRFLTCG…EVLETVDIQR (215 aa)) enclose the tr-type G domain. Residues 34 to 41 (GSVDDGKS) are G1. 34 to 41 (GSVDDGKS) lines the GTP pocket. The segment at 92–96 (GITID) is G2. Positions 113-116 (DTPG) are G3. GTP-binding positions include 113-117 (DTPGH) and 168-171 (NKMD). Positions 168–171 (NKMD) are G4. Residues 206–208 (SAL) are G5.

The protein belongs to the TRAFAC class translation factor GTPase superfamily. Classic translation factor GTPase family. CysN/NodQ subfamily. As to quaternary structure, heterodimer composed of CysD, the smaller subunit, and CysN.

It catalyses the reaction sulfate + ATP + H(+) = adenosine 5'-phosphosulfate + diphosphate. It participates in sulfur metabolism; hydrogen sulfide biosynthesis; sulfite from sulfate: step 1/3. With CysD forms the ATP sulfurylase (ATPS) that catalyzes the adenylation of sulfate producing adenosine 5'-phosphosulfate (APS) and diphosphate, the first enzymatic step in sulfur assimilation pathway. APS synthesis involves the formation of a high-energy phosphoric-sulfuric acid anhydride bond driven by GTP hydrolysis by CysN coupled to ATP hydrolysis by CysD. The polypeptide is Sulfate adenylyltransferase subunit 1 (Salmonella agona (strain SL483)).